A 245-amino-acid polypeptide reads, in one-letter code: Phycocyanobilin:ferredoxin oxidoreductase (245 aa).

Belongs to the HY2 family.

It carries out the reaction (2R,3Z)-phycocyanobilin + 4 oxidized [2Fe-2S]-[ferredoxin] = biliverdin IXalpha + 4 reduced [2Fe-2S]-[ferredoxin] + 4 H(+). Its function is as follows. Catalyzes the four-electron reduction of biliverdin IX-alpha (2-electron reduction at both the A and D rings); the reaction proceeds via an isolatable 2-electron intermediate, 181,182-dihydrobiliverdin. The protein is Phycocyanobilin:ferredoxin oxidoreductase of Gloeothece citriformis (strain PCC 7424) (Cyanothece sp. (strain PCC 7424)).